The chain runs to 186 residues: Calcium load-activated calcium channel homolog (186 aa).

Topologically, residues 1-6 (MLGDCL) are cytoplasmic. A helical membrane pass occupies residues 7-27 (LIIAIAFGTALAGEGITWLLV). Residues 28–87 (YRSDHYKRLKADMDKKTKKLEKKKQEVGDTNDKNIKRKLEREEERLKATNRDMSMFKMKS) are Lumenal-facing. Residues 30–86 (SDHYKRLKADMDKKTKKLEKKKQEVGDTNDKNIKRKLEREEERLKATNRDMSMFKMK) are a coiled coil. A helical membrane pass occupies residues 88 to 108 (MFAIGLAFTALLSTFNSIFEG). The Cytoplasmic portion of the chain corresponds to 109-134 (RVVAKLPFYPIGFIQGLSHRNLIGED). Residues 135–151 (MTDCSFIFLYILCTMTV) constitute an intramembrane region (pore-forming). Topologically, residues 152–186 (RQNLQKILGFAPSRAMARQQSSPWAPPNSQMNYLR) are cytoplasmic.

This sequence belongs to the TMCO1 family. In terms of assembly, homodimer and homotetramer.

It is found in the endoplasmic reticulum membrane. Calcium-selective channel required to prevent calcium stores from overfilling. The polypeptide is Calcium load-activated calcium channel homolog (Caenorhabditis elegans).